A 745-amino-acid chain; its full sequence is Probable xanthine dehydrogenase subunit D (745 aa).

Mo-molybdopterin-binding residues include Gln204, Phe235, and Ala508.

The protein belongs to the xanthine dehydrogenase family. In terms of assembly, could be composed of four subunits: PucA, PucC, PucD and PucE. Requires Mo-molybdopterin as cofactor.

It carries out the reaction xanthine + NAD(+) + H2O = urate + NADH + H(+). The catalysed reaction is hypoxanthine + NAD(+) + H2O = xanthine + NADH + H(+). It participates in purine metabolism; hypoxanthine degradation; urate from hypoxanthine: step 1/2. It functions in the pathway purine metabolism; hypoxanthine degradation; urate from hypoxanthine: step 2/2. In terms of biological role, oxidizes hypoxanthine and xanthine to uric acid. The chain is Probable xanthine dehydrogenase subunit D (pucD) from Bacillus subtilis (strain 168).